The primary structure comprises 424 residues: Histidine--tRNA ligase (424 aa).

The protein belongs to the class-II aminoacyl-tRNA synthetase family. Homodimer.

It is found in the cytoplasm. It carries out the reaction tRNA(His) + L-histidine + ATP = L-histidyl-tRNA(His) + AMP + diphosphate + H(+). The polypeptide is Histidine--tRNA ligase (Shewanella sediminis (strain HAW-EB3)).